We begin with the raw amino-acid sequence, 242 residues long: Uridylate kinase (242 aa).

An ATP-binding site is contributed by 11–14; it reads KLSG. UMP is bound at residue Gly-53. ATP-binding residues include Gly-54 and Arg-58. UMP-binding positions include Asp-73 and 134–141; that span reads SGNPFFTT. Residues Thr-161, Tyr-167, and Asp-170 each contribute to the ATP site.

Belongs to the UMP kinase family. As to quaternary structure, homohexamer.

The protein resides in the cytoplasm. It catalyses the reaction UMP + ATP = UDP + ADP. It functions in the pathway pyrimidine metabolism; CTP biosynthesis via de novo pathway; UDP from UMP (UMPK route): step 1/1. Inhibited by UTP. Catalyzes the reversible phosphorylation of UMP to UDP. The polypeptide is Uridylate kinase (Thermosynechococcus vestitus (strain NIES-2133 / IAM M-273 / BP-1)).